Here is a 291-residue protein sequence, read N- to C-terminus: Phosphatidylglycerol--prolipoprotein diacylglyceryl transferase (291 aa).

Transmembrane regions (helical) follow at residues 24 to 44 (WYALAYIGGIMLGWLYARALL), 64 to 84 (FILWVTIGIILGGRTGYVLFY), 99 to 119 (IWKGGMSFHGGFMGCVVAVIL), and 125 to 145 (GLPILSLGDVATAVGPIGLFL). Position 147 (arginine 147) interacts with a 1,2-diacyl-sn-glycero-3-phospho-(1'-sn-glycerol). 3 consecutive transmembrane segments (helical) span residues 187–207 (ATLEGLVLFTILALMIRAGAL), 211–231 (GLVLGSFITLYAMARIAGEFF), and 247–267 (MGMLLSAPMIIAGLAIICVAW).

It belongs to the Lgt family.

The protein resides in the cell inner membrane. It carries out the reaction L-cysteinyl-[prolipoprotein] + a 1,2-diacyl-sn-glycero-3-phospho-(1'-sn-glycerol) = an S-1,2-diacyl-sn-glyceryl-L-cysteinyl-[prolipoprotein] + sn-glycerol 1-phosphate + H(+). The protein operates within protein modification; lipoprotein biosynthesis (diacylglyceryl transfer). Its function is as follows. Catalyzes the transfer of the diacylglyceryl group from phosphatidylglycerol to the sulfhydryl group of the N-terminal cysteine of a prolipoprotein, the first step in the formation of mature lipoproteins. This chain is Phosphatidylglycerol--prolipoprotein diacylglyceryl transferase, found in Nitrobacter hamburgensis (strain DSM 10229 / NCIMB 13809 / X14).